The following is a 235-amino-acid chain: Ribosomal RNA large subunit methyltransferase E (235 aa).

Positions 76, 78, 99, 115, and 139 each coordinate S-adenosyl-L-methionine. Lys179 acts as the Proton acceptor in catalysis.

It belongs to the class I-like SAM-binding methyltransferase superfamily. RNA methyltransferase RlmE family.

The protein localises to the cytoplasm. It carries out the reaction uridine(2552) in 23S rRNA + S-adenosyl-L-methionine = 2'-O-methyluridine(2552) in 23S rRNA + S-adenosyl-L-homocysteine + H(+). Specifically methylates the uridine in position 2552 of 23S rRNA at the 2'-O position of the ribose in the fully assembled 50S ribosomal subunit. The sequence is that of Ribosomal RNA large subunit methyltransferase E from Rhodopseudomonas palustris (strain BisB5).